The following is a 176-amino-acid chain: Small ribosomal subunit protein uS4 (176 aa).

In terms of domain architecture, S4 RNA-binding spans 103–165 (RRLQTIVYKK…PTSPYAKRRL (63 aa)).

It belongs to the universal ribosomal protein uS4 family. In terms of assembly, part of the 30S ribosomal subunit. Contacts protein S5. The interaction surface between S4 and S5 is involved in control of translational fidelity.

In terms of biological role, one of the primary rRNA binding proteins, it binds directly to 16S rRNA where it nucleates assembly of the body of the 30S subunit. With S5 and S12 plays an important role in translational accuracy. The protein is Small ribosomal subunit protein uS4 of Hyperthermus butylicus (strain DSM 5456 / JCM 9403 / PLM1-5).